The sequence spans 497 residues: Glycerol kinase (497 aa).

Residue threonine 13 coordinates ADP. ATP-binding residues include threonine 13, threonine 14, and serine 15. Threonine 13 is a sn-glycerol 3-phosphate binding site. Arginine 17 contributes to the ADP binding site. Positions 83, 84, and 135 each coordinate sn-glycerol 3-phosphate. Positions 83, 84, and 135 each coordinate glycerol. Phosphohistidine; by HPr is present on histidine 231. Position 245 (aspartate 245) interacts with sn-glycerol 3-phosphate. Glycerol contacts are provided by aspartate 245 and glutamine 246. 2 residues coordinate ADP: threonine 267 and glycine 310. Residues threonine 267, glycine 310, glutamine 314, and glycine 411 each contribute to the ATP site. Positions 411 and 415 each coordinate ADP.

The protein belongs to the FGGY kinase family. As to quaternary structure, homotetramer and homodimer (in equilibrium). In terms of processing, the phosphoenolpyruvate-dependent sugar phosphotransferase system (PTS), including enzyme I, and histidine-containing protein (HPr) are required for the phosphorylation, which leads to the activation of the enzyme.

The enzyme catalyses glycerol + ATP = sn-glycerol 3-phosphate + ADP + H(+). Its pathway is polyol metabolism; glycerol degradation via glycerol kinase pathway; sn-glycerol 3-phosphate from glycerol: step 1/1. With respect to regulation, activated by phosphorylation and inhibited by fructose 1,6-bisphosphate (FBP). Key enzyme in the regulation of glycerol uptake and metabolism. Catalyzes the phosphorylation of glycerol to yield sn-glycerol 3-phosphate. This Halalkalibacterium halodurans (strain ATCC BAA-125 / DSM 18197 / FERM 7344 / JCM 9153 / C-125) (Bacillus halodurans) protein is Glycerol kinase.